We begin with the raw amino-acid sequence, 400 residues long: Phosphoglycerate kinase (400 aa).

Substrate is bound by residues 21 to 23 (DFN), Arg-37, 60 to 63 (HFGR), Arg-119, and Arg-152. Residues Lys-205, Gly-296, Glu-327, and 353–356 (GGDT) each bind ATP.

It belongs to the phosphoglycerate kinase family. As to quaternary structure, monomer.

Its subcellular location is the cytoplasm. The enzyme catalyses (2R)-3-phosphoglycerate + ATP = (2R)-3-phospho-glyceroyl phosphate + ADP. The protein operates within carbohydrate degradation; glycolysis; pyruvate from D-glyceraldehyde 3-phosphate: step 2/5. The sequence is that of Phosphoglycerate kinase from Aliarcobacter butzleri (strain RM4018) (Arcobacter butzleri).